Consider the following 434-residue polypeptide: Glutamate-1-semialdehyde 2,1-aminomutase (434 aa).

Lys274 carries the post-translational modification N6-(pyridoxal phosphate)lysine.

Belongs to the class-III pyridoxal-phosphate-dependent aminotransferase family. HemL subfamily. In terms of assembly, homodimer. Pyridoxal 5'-phosphate is required as a cofactor.

The protein resides in the cytoplasm. It catalyses the reaction (S)-4-amino-5-oxopentanoate = 5-aminolevulinate. It participates in porphyrin-containing compound metabolism; protoporphyrin-IX biosynthesis; 5-aminolevulinate from L-glutamyl-tRNA(Glu): step 2/2. The protein is Glutamate-1-semialdehyde 2,1-aminomutase of Acidovorax sp. (strain JS42).